The following is a 185-amino-acid chain: Ubiquitin-conjugating enzyme E2 2 (185 aa).

A UBC core domain is found at proline 4–leucine 150. Cysteine 88 functions as the Glycyl thioester intermediate in the catalytic mechanism. A compositionally biased stretch (acidic residues) spans tryptophan 149–alanine 173. Residues tryptophan 149–alanine 185 form a disordered region.

It belongs to the ubiquitin-conjugating enzyme family.

The protein localises to the cytoplasm. Its subcellular location is the nucleus. The enzyme catalyses S-ubiquitinyl-[E1 ubiquitin-activating enzyme]-L-cysteine + [E2 ubiquitin-conjugating enzyme]-L-cysteine = [E1 ubiquitin-activating enzyme]-L-cysteine + S-ubiquitinyl-[E2 ubiquitin-conjugating enzyme]-L-cysteine.. The protein operates within protein modification; protein ubiquitination. Its function is as follows. Catalyzes the covalent attachment of ubiquitin to other proteins. Plays a role in transcription regulation by catalyzing the monoubiquitination of histone H2B to form H2BK123ub1. H2BK123ub1 gives a specific tag for epigenetic transcriptional activation and is also a prerequisite for H3K4me and H3K79me formation. Also involved in postreplication repair of UV-damaged DNA, in N-end rule-dependent protein degradation and in sporulation. The chain is Ubiquitin-conjugating enzyme E2 2 (UBC2) from Mycosarcoma maydis (Corn smut fungus).